Consider the following 460-residue polypeptide: Decaprenylphosphoryl-beta-D-ribose oxidase (460 aa).

An FAD-binding PCMH-type domain is found at 19-193 (TAPTVASVLS…LRATIEMTPT (175 aa)). FAD is bound by residues 52–62 (ARGLGRSYGDN), Gly116, 121–124 (TVGG), 128–131 (CDIH), Ile183, and Tyr414.

It belongs to the DprE1 family. As to quaternary structure, monomer. Interacts with DprE2 to form an epimerase complex.

It is found in the periplasm. The enzyme catalyses trans,octa-cis-decaprenylphospho-beta-D-ribofuranose + FAD + H(+) = trans,octa-cis-decaprenylphospho-beta-D-erythro-pentofuranosid-2-ulose + FADH2. It functions in the pathway cell wall biogenesis; cell wall polysaccharide biosynthesis. Is inhibited by 8-nitro-benzothiazinones (BTZs) such as BTZ043; BTZs are a new class of antimycobacterial agents that block formation of both cell-wall lipoarabinomannan and arabinogalactan via inhibition of decaprenyl-phospho-arabinose (DPA) synthesis. BTZs are suicide inhibitors that act via covalent modification of DprE1; the essential nitro group of these compounds is reduced by DprE1 to a nitroso group, which then specifically reacts with Cys-386 of DprE1 to form an irreversible semimercaptal adduct. Other compounds with diverse scaffolds (dinitrobenzamides and nitrobenzoquinoxalines) also act as covalent DprE1 inhibitors. Functionally, component of the DprE1-DprE2 complex that catalyzes the 2-step epimerization of decaprenyl-phospho-ribose (DPR) to decaprenyl-phospho-arabinose (DPA), a key precursor that serves as the arabinose donor required for the synthesis of cell-wall arabinans. DprE1 catalyzes the first step of epimerization, namely FAD-dependent oxidation of the C2' hydroxyl of DPR to yield the keto intermediate decaprenyl-phospho-2'-keto-D-arabinose (DPX). The intermediate DPX is then transferred to DprE2 subunit of the epimerase complex, most probably through a 'substrate channel' at the interface of DprE1-DprE2 complex. Can also use farnesyl-phosphoryl-beta-D-ribofuranose (FPR) as substrate in vitro. Appears to be essential for the growth of M.smegmatis. This is Decaprenylphosphoryl-beta-D-ribose oxidase from Mycolicibacterium smegmatis (strain ATCC 700084 / mc(2)155) (Mycobacterium smegmatis).